A 274-amino-acid polypeptide reads, in one-letter code: 4-diphosphocytidyl-2-C-methyl-D-erythritol kinase (274 aa).

Lys8 is an active-site residue. Position 92 to 102 (92 to 102 (PSGAGLGGGSS)) interacts with ATP. Asp134 is an active-site residue.

It belongs to the GHMP kinase family. IspE subfamily.

It carries out the reaction 4-CDP-2-C-methyl-D-erythritol + ATP = 4-CDP-2-C-methyl-D-erythritol 2-phosphate + ADP + H(+). It participates in isoprenoid biosynthesis; isopentenyl diphosphate biosynthesis via DXP pathway; isopentenyl diphosphate from 1-deoxy-D-xylulose 5-phosphate: step 3/6. Its function is as follows. Catalyzes the phosphorylation of the position 2 hydroxy group of 4-diphosphocytidyl-2C-methyl-D-erythritol. The chain is 4-diphosphocytidyl-2-C-methyl-D-erythritol kinase from Porphyromonas gingivalis (strain ATCC 33277 / DSM 20709 / CIP 103683 / JCM 12257 / NCTC 11834 / 2561).